The sequence spans 218 residues: Adenylate kinase (218 aa).

Residue 14 to 19 coordinates ATP; it reads GAGKGT. An NMP region spans residues 34 to 63; the sequence is STGDMFRAAIKAGTELGKQAKALMDEGKLV. Residues Thr35, Arg40, 61–63, 89–92, and Gln96 each bind AMP; these read KLV and GFPR. The tract at residues 126–163 is LID; the sequence is GRRVHQASGRSYHIVYNPPKVEGKDDVTGEDLIIRADD. ATP contacts are provided by residues Arg127 and 136 to 137; that span reads SY. Residues Arg160 and Arg171 each coordinate AMP. Lys204 provides a ligand contact to ATP.

This sequence belongs to the adenylate kinase family. As to quaternary structure, monomer.

The protein resides in the cytoplasm. It carries out the reaction AMP + ATP = 2 ADP. It participates in purine metabolism; AMP biosynthesis via salvage pathway; AMP from ADP: step 1/1. Catalyzes the reversible transfer of the terminal phosphate group between ATP and AMP. Plays an important role in cellular energy homeostasis and in adenine nucleotide metabolism. The chain is Adenylate kinase from Mannheimia succiniciproducens (strain KCTC 0769BP / MBEL55E).